A 276-amino-acid polypeptide reads, in one-letter code: Large ribosomal subunit protein uL2 (276 aa).

The interval 223-276 (AVMNPVDHPHGGGEGKNSVGRKSPLTPWGKPALGIKTRGRKTSDKFIVRRRNEK) is disordered. The segment covering 263–276 (KTSDKFIVRRRNEK) has biased composition (basic and acidic residues).

It belongs to the universal ribosomal protein uL2 family. Part of the 50S ribosomal subunit. Forms a bridge to the 30S subunit in the 70S ribosome.

In terms of biological role, one of the primary rRNA binding proteins. Required for association of the 30S and 50S subunits to form the 70S ribosome, for tRNA binding and peptide bond formation. It has been suggested to have peptidyltransferase activity; this is somewhat controversial. Makes several contacts with the 16S rRNA in the 70S ribosome. The sequence is that of Large ribosomal subunit protein uL2 from Fusobacterium nucleatum subsp. nucleatum (strain ATCC 25586 / DSM 15643 / BCRC 10681 / CIP 101130 / JCM 8532 / KCTC 2640 / LMG 13131 / VPI 4355).